An 818-amino-acid polypeptide reads, in one-letter code: Hillarin (818 aa).

Residues 9–76 enclose the LIM zinc-binding domain; sequence STCLRCSETV…SSHVPKSGPG (68 aa). Positions 97–141 are disordered; the sequence is FVNEQIRGTRSEVDGGPLGGSRQSTPNGYGSREISSPSQNDSDYK. A compositionally biased stretch (polar residues) spans 117–137; sequence SRQSTPNGYGSREISSPSQND. Residues 216–272 adopt a coiled-coil conformation; sequence QDEWERELQRLTHKFEKELATSRRSRDEANILTMRHEQQKEDLEKNMTLRRSKKKES.

This sequence belongs to the transglutaminase-like superfamily. In terms of assembly, interacts with pnut. As to expression, localizes to the neuropil of the embryonic central nervous system (at protein level). Also detected in third instar larval brain (at protein level).

The protein localises to the cytoplasm. It is found in the cell cortex. It localises to the cleavage furrow. Functionally, may act as a modulator of septin function during cytokinesis in the developing nervous system. This is Hillarin from Drosophila melanogaster (Fruit fly).